Reading from the N-terminus, the 589-residue chain is MVKRSCPSCGLEAGSEKKERGNPISVQLFPPELVEHIVSFLPVKDLVALGQTCHYFHEVCDAEGVWRRICRRLSPRIRDQSSGARPWKRAAILNYTKGLYFQAFGGRRRCLSKSVAPMLAHGYRRFLPTKDHVFILDYVGTLFFLKNALVSSTLGQIQWKRACRYVVLCRGAKDFASDPRCDTVYRKYLYVLATREQPAVVGTTGSRACDCVEVYLQSSGQRVFKMTFHHSMSFKQIVLVGQETQRALLLLTEEGKIYSLVVNETQLDQPRSYTVQLALRKVSRCLPHLRVTCMASNQSSTLYITGGTLIPRKQVPKAAELRAPDPPDQGGVYFEVHTPGVYRDLFGTLQAFDPLDHQMPLALSLPAKVLFCALGYNHLGLVDEFGRIFMQGNNRYGQLGTGDKMDRGEPTQVHYLQRPIALWCGLNHSLVLSQTSDFSKELLGCGCGAGGRLPGWPKGSASFVKLHIKVPLCACSLCSTRECLYMLSSHDIEQCPVYRDLPASRVGGSPEPSQGAGAPQDPGGTAQACEEYLSQIHSCPTLQDRMEKMKEIVGWMPLMAAQKDFFWEALDMLQRAAGGAGPDTSTPES.

Positions 23–69 (PISVQLFPPELVEHIVSFLPVKDLVALGQTCHYFHEVCDAEGVWRRI) constitute an F-box domain. The stretch at 386 to 435 (GRIFMQGNNRYGQLGTGDKMDRGEPTQVHYLQRPIALWCGLNHSLVLSQT) is one RCC1 repeat. The interval 506-526 (VGGSPEPSQGAGAPQDPGGTA) is disordered.

As to quaternary structure, directly interacts with SKP1 and CUL1.

Its function is as follows. Substrate-recognition component of the SCF (SKP1-CUL1-F-box protein)-type E3 ubiquitin ligase complex. The chain is F-box only protein 24 (Fbxo24) from Mus musculus (Mouse).